We begin with the raw amino-acid sequence, 205 residues long: Putative 3-methyladenine DNA glycosylase (205 aa).

It belongs to the DNA glycosylase MPG family.

The protein is Putative 3-methyladenine DNA glycosylase of Bacillus cereus (strain ATCC 10987 / NRS 248).